The sequence spans 513 residues: Maturase K (513 aa).

It belongs to the intron maturase 2 family. MatK subfamily.

The protein localises to the plastid. Its subcellular location is the chloroplast. Functionally, usually encoded in the trnK tRNA gene intron. Probably assists in splicing its own and other chloroplast group II introns. This Zea mays (Maize) protein is Maturase K.